The primary structure comprises 28 residues: Grammistin Gs A (28 aa).

This sequence belongs to the grammistin family. Group 3 subfamily. As to quaternary structure, exists as aggregates of 3-4 molecules. In terms of tissue distribution, expressed by the skin glands.

It localises to the secreted. In terms of biological role, thanks to its amphiphilic alpha-helice(s), it may integrate into membrane phospholipids, leading to lysis of the membrane. Has no substantial hemolytic activity. Has antibacterial activity with a broad spectrum against various species of bacteria including both Gram-positive and Gram-negative groups. The protein is Grammistin Gs A of Grammistes sexlineatus (Goldenstriped soapfish).